Reading from the N-terminus, the 872-residue chain is Leucine-rich repeat-containing protein 66 (872 aa).

The chain crosses the membrane as a helical span at residues 4-24 (FYVRVTILVTGLCFVETVTTP). N-linked (GlcNAc...) asparagine glycosylation is found at Asn-45 and Asn-108. 5 LRR repeats span residues 142 to 164 (RLQV…WKLK), 165 to 186 (SLRS…DFHG), 189 to 210 (QLES…AFKG), 213 to 234 (KLQV…VTIA), and 239 to 259 (HLEL…VNFQ). A disordered region spans residues 339–363 (LRGMWPQSPVELRDSQDEQVTDRKD). The segment covering 349–363 (ELRDSQDEQVTDRKD) has biased composition (basic and acidic residues). A helical membrane pass occupies residues 371–391 (LAICLSVFITFVVAFCLGAFA). Positions 467-483 (QMLGSNGTDPGHQQSPE) are enriched in polar residues. Disordered regions lie at residues 467 to 501 (QMLG…VLPS), 560 to 579 (GTFP…SQPR), 695 to 761 (NYES…SQRI), and 776 to 872 (LISG…SKHW). An N-linked (GlcNAc...) asparagine glycan is attached at Asn-472. Over residues 484–493 (QLKDSNESRS) the composition is skewed to basic and acidic residues. Residue Ser-718 is modified to Phosphoserine. 3 stretches are compositionally biased toward polar residues: residues 725 to 736 (SVENDGTSQPLP), 746 to 760 (SVTS…TSQR), and 785 to 805 (CETN…STWP). Ser-752 is modified (phosphoserine). Positions 831–841 (VDWHYSLRDLE) are enriched in basic and acidic residues.

It is found in the membrane. The polypeptide is Leucine-rich repeat-containing protein 66 (Lrrc66) (Mus musculus (Mouse)).